The primary structure comprises 454 residues: Histidine--tRNA ligase (454 aa).

The tract at residues 434-454 (ADAGAWNPPTEDLHPGVIGTW) is disordered.

This sequence belongs to the class-II aminoacyl-tRNA synthetase family. Homodimer.

The protein resides in the cytoplasm. The catalysed reaction is tRNA(His) + L-histidine + ATP = L-histidyl-tRNA(His) + AMP + diphosphate + H(+). The chain is Histidine--tRNA ligase (hisS) from Cutibacterium acnes (strain DSM 16379 / KPA171202) (Propionibacterium acnes).